The primary structure comprises 440 residues: uncharacterized protein (440 aa).

Residues 1–29 form the signal peptide; that stretch reads MLRLQMMEGLIVKRTLLLILLLVISVSYA.

It belongs to the Mj S-layer protein family.

This is an uncharacterized protein from Methanocaldococcus jannaschii (strain ATCC 43067 / DSM 2661 / JAL-1 / JCM 10045 / NBRC 100440) (Methanococcus jannaschii).